The chain runs to 216 residues: Transmembrane emp24 domain-containing protein eca (216 aa).

An N-terminal signal peptide occupies residues 1-20 (MRDQFISLALMLCILHSACG). Residues 21–182 (LYFHISETER…FRHTSESTNS (162 aa)) are Lumenal-facing. The 97-residue stretch at 30–126 (RKCFIEEVPD…QLRVHLDIQV (97 aa)) folds into the GOLD domain. Residues 134-164 (ANVAQKEKLTELQLRIRQLLDQVEQITKEQN) are a coiled coil. The chain crosses the membrane as a helical span at residues 183 to 203 (RVLWWSLAQTVVLVCMGFWQM). The Cytoplasmic portion of the chain corresponds to 204–216 (RHLKSFFEAKKLV). The Prevents secretion from ER signature appears at 213–216 (KKLV).

Belongs to the EMP24/GP25L family.

It localises to the endoplasmic reticulum membrane. Its function is as follows. Eca and bai are essential, though not redundant, for dorsoventral patterning of the embryo. Specifically required during early embryogenesis for the activity of maternal tkv, while the zygotic tkv is not affected. Involved in Golgi organization. In Drosophila erecta (Fruit fly), this protein is Transmembrane emp24 domain-containing protein eca.